A 419-amino-acid chain; its full sequence is Serine hydroxymethyltransferase (419 aa).

Residues leucine 118 and 122 to 124 each bind (6S)-5,6,7,8-tetrahydrofolate; that span reads GHL. Lysine 226 bears the N6-(pyridoxal phosphate)lysine mark. Glutamate 242 lines the (6S)-5,6,7,8-tetrahydrofolate pocket.

The protein belongs to the SHMT family. In terms of assembly, homodimer. Pyridoxal 5'-phosphate serves as cofactor.

The protein resides in the cytoplasm. The enzyme catalyses (6R)-5,10-methylene-5,6,7,8-tetrahydrofolate + glycine + H2O = (6S)-5,6,7,8-tetrahydrofolate + L-serine. It functions in the pathway one-carbon metabolism; tetrahydrofolate interconversion. The protein operates within amino-acid biosynthesis; glycine biosynthesis; glycine from L-serine: step 1/1. Functionally, catalyzes the reversible interconversion of serine and glycine with tetrahydrofolate (THF) serving as the one-carbon carrier. This reaction serves as the major source of one-carbon groups required for the biosynthesis of purines, thymidylate, methionine, and other important biomolecules. Also exhibits THF-independent aldolase activity toward beta-hydroxyamino acids, producing glycine and aldehydes, via a retro-aldol mechanism. The polypeptide is Serine hydroxymethyltransferase (Metamycoplasma arthritidis (strain 158L3-1) (Mycoplasma arthritidis)).